A 92-amino-acid chain; its full sequence is DNA-directed RNA polymerase subunit omega (92 aa).

It belongs to the RNA polymerase subunit omega family. In terms of assembly, the RNAP catalytic core consists of 2 alpha, 1 beta, 1 beta' and 1 omega subunit. When a sigma factor is associated with the core the holoenzyme is formed, which can initiate transcription.

It carries out the reaction RNA(n) + a ribonucleoside 5'-triphosphate = RNA(n+1) + diphosphate. In terms of biological role, promotes RNA polymerase assembly. Latches the N- and C-terminal regions of the beta' subunit thereby facilitating its interaction with the beta and alpha subunits. The sequence is that of DNA-directed RNA polymerase subunit omega from Shewanella sp. (strain ANA-3).